We begin with the raw amino-acid sequence, 307 residues long: Lipoyl synthase (307 aa).

7 residues coordinate [4Fe-4S] cluster: Cys55, Cys60, Cys66, Cys81, Cys85, Cys88, and Ser292. Residues 67 to 281 (WEDREATFLI…ARHAEELGFS (215 aa)) form the Radical SAM core domain.

It belongs to the radical SAM superfamily. Lipoyl synthase family. [4Fe-4S] cluster is required as a cofactor.

It localises to the cytoplasm. It catalyses the reaction [[Fe-S] cluster scaffold protein carrying a second [4Fe-4S](2+) cluster] + N(6)-octanoyl-L-lysyl-[protein] + 2 oxidized [2Fe-2S]-[ferredoxin] + 2 S-adenosyl-L-methionine + 4 H(+) = [[Fe-S] cluster scaffold protein] + N(6)-[(R)-dihydrolipoyl]-L-lysyl-[protein] + 4 Fe(3+) + 2 hydrogen sulfide + 2 5'-deoxyadenosine + 2 L-methionine + 2 reduced [2Fe-2S]-[ferredoxin]. The protein operates within protein modification; protein lipoylation via endogenous pathway; protein N(6)-(lipoyl)lysine from octanoyl-[acyl-carrier-protein]: step 2/2. In terms of biological role, catalyzes the radical-mediated insertion of two sulfur atoms into the C-6 and C-8 positions of the octanoyl moiety bound to the lipoyl domains of lipoate-dependent enzymes, thereby converting the octanoylated domains into lipoylated derivatives. The sequence is that of Lipoyl synthase from Mycolicibacterium paratuberculosis (strain ATCC BAA-968 / K-10) (Mycobacterium paratuberculosis).